An 846-amino-acid chain; its full sequence is Neurotactin (846 aa).

The tract at residues 1–222 is disordered; the sequence is MGELEEKETP…EDASDAPPKR (222 aa). Over 1–324 the chain is Cytoplasmic; the sequence is MGELEEKETP…LRGYKCSVDD (324 aa). The span at 11-20 shows a compositional bias: low complexity; the sequence is PTETTAAQQE. Positions 23-42 are enriched in basic and acidic residues; sequence EEPKETDKMLDKKEDAKEKT. At Thr28 the chain carries Phosphothreonine; by PKC. The residue at position 42 (Thr42) is a Phosphothreonine. Residue Ser44 is modified to Phosphoserine. Position 47 is a phosphothreonine (Thr47). 2 positions are modified to phosphoserine: Ser48 and Ser52. Basic and acidic residues predominate over residues 63-74; the sequence is AEKKIDDAELAK. Ser75 is modified (phosphoserine; by PKC). Phosphoserine is present on Ser77. Composition is skewed to basic and acidic residues over residues 95-111, 141-155, 163-178, and 185-205; these read DSADDKKISKEEREVKP, LLEKEKEEDKDKEAN, GKDEQKSRPGLGERLR, and PSAEKEKKQLVNGDADAKSEA. Residue Ser103 is modified to Phosphoserine; by PKC. The residue at position 169 (Ser169) is a Phosphoserine; by PKC. Phosphoserine is present on residues Ser186 and Ser203. Residue Thr206 is modified to Phosphothreonine. Ser256 is modified (phosphoserine). The residue at position 259 (Thr259) is a Phosphothreonine. Residue Ser263 is modified to Phosphoserine. Thr269 is modified (phosphothreonine). Residues 325–346 traverse the membrane as a helical; Signal-anchor for type II membrane protein segment; it reads ALIVFGILLFVLLLGVIGYVLT. The Extracellular portion of the chain corresponds to 347–846; that stretch reads HETLTSPPLR…DIVPRYARVD (500 aa). Asn410, Asn417, and Asn428 each carry an N-linked (GlcNAc...) asparagine glycan. 2 disulfides stabilise this stretch: Cys422-Cys437 and Cys600-Cys605. Residues Asn636, Asn691, and Asn720 are each glycosylated (N-linked (GlcNAc...) asparagine). A disulfide bridge connects residues Cys738 and Cys830.

The protein in the C-terminal section; belongs to the type-B carboxylesterase/lipase family. Late in embryogenesis, expression is restricted to cells of the peripheral and central nervous system undergoing proliferation and differentiation. Also expressed in larval CNS, mesoderm and imaginal disks.

The protein resides in the membrane. Functionally, may mediate or modulate cell adhesion between embryonic cells during development. This chain is Neurotactin (Nrt), found in Drosophila melanogaster (Fruit fly).